Consider the following 372-residue polypeptide: Tryptophan--tRNA ligase (372 aa).

The 'HIGH' region signature appears at 79 to 87 (PSGKFHFGH). Positions 247-268 (KLQPGLDGRKMSSSRPDSTIFL) are disordered. The 'KMSKS' region signature appears at 256-260 (KMSSS). Residues 257–267 (MSSSRPDSTIF) are compositionally biased toward polar residues.

Belongs to the class-I aminoacyl-tRNA synthetase family.

Its subcellular location is the cytoplasm. The enzyme catalyses tRNA(Trp) + L-tryptophan + ATP = L-tryptophyl-tRNA(Trp) + AMP + diphosphate + H(+). In Aeropyrum pernix (strain ATCC 700893 / DSM 11879 / JCM 9820 / NBRC 100138 / K1), this protein is Tryptophan--tRNA ligase.